The chain runs to 303 residues: D-alanine--D-alanine ligase (303 aa).

The region spanning 100–295 is the ATP-grasp domain; sequence KQLLRRHGIL…FPALIARLIE (196 aa). 127 to 180 lines the ATP pocket; sequence GLGYPLFVKPNTGGSSLCLSRVTQPEGLAPALEAVFAHCGEAIVEPAIPGVEVT. Asp-249, Glu-262, and Asn-264 together coordinate Mg(2+).

This sequence belongs to the D-alanine--D-alanine ligase family. The cofactor is Mg(2+). It depends on Mn(2+) as a cofactor.

It is found in the cytoplasm. It carries out the reaction 2 D-alanine + ATP = D-alanyl-D-alanine + ADP + phosphate + H(+). It functions in the pathway cell wall biogenesis; peptidoglycan biosynthesis. Its function is as follows. Cell wall formation. The protein is D-alanine--D-alanine ligase of Nitratidesulfovibrio vulgaris (strain ATCC 29579 / DSM 644 / CCUG 34227 / NCIMB 8303 / VKM B-1760 / Hildenborough) (Desulfovibrio vulgaris).